The sequence spans 186 residues: ATP synthase subunit b, chloroplastic (186 aa).

Residues 27 to 43 (IFETNILNLAVVLGILL) traverse the membrane as a helical segment.

The protein belongs to the ATPase B chain family. F-type ATPases have 2 components, F(1) - the catalytic core - and F(0) - the membrane proton channel. F(1) has five subunits: alpha(3), beta(3), gamma(1), delta(1), epsilon(1). F(0) has four main subunits: a(1), b(1), b'(1) and c(10-14). The alpha and beta chains form an alternating ring which encloses part of the gamma chain. F(1) is attached to F(0) by a central stalk formed by the gamma and epsilon chains, while a peripheral stalk is formed by the delta, b and b' chains.

It is found in the plastid. The protein localises to the chloroplast thylakoid membrane. F(1)F(0) ATP synthase produces ATP from ADP in the presence of a proton or sodium gradient. F-type ATPases consist of two structural domains, F(1) containing the extramembraneous catalytic core and F(0) containing the membrane proton channel, linked together by a central stalk and a peripheral stalk. During catalysis, ATP synthesis in the catalytic domain of F(1) is coupled via a rotary mechanism of the central stalk subunits to proton translocation. Functionally, component of the F(0) channel, it forms part of the peripheral stalk, linking F(1) to F(0). The polypeptide is ATP synthase subunit b, chloroplastic (Mesostigma viride (Green alga)).